We begin with the raw amino-acid sequence, 101 residues long: MDIRILKDKNNALLNRRELDFIVKYEGSTPSRNDVRNKLAAMLNAPLELVVVQRLKTEYGMQEGKGYAKIYENADRMKDVELEYVLKRNVAPGMETEGEEA.

Belongs to the eukaryotic ribosomal protein eS24 family.

The protein is Small ribosomal subunit protein eS24 of Methanosarcina barkeri (strain Fusaro / DSM 804).